The following is a 220-amino-acid chain: uncharacterized protein (220 aa).

This is an uncharacterized protein from Bacillus subtilis (strain 168).